Reading from the N-terminus, the 432-residue chain is D-amino acid dehydrogenase (432 aa).

Position 3–17 (3–17) interacts with FAD; that stretch reads VVILGSGVVGVASAW.

This sequence belongs to the DadA oxidoreductase family. FAD is required as a cofactor.

It catalyses the reaction a D-alpha-amino acid + A + H2O = a 2-oxocarboxylate + AH2 + NH4(+). Its pathway is amino-acid degradation; D-alanine degradation; NH(3) and pyruvate from D-alanine: step 1/1. Functionally, oxidative deamination of D-amino acids. This is D-amino acid dehydrogenase from Shigella sonnei (strain Ss046).